The sequence spans 261 residues: Type III pantothenate kinase (261 aa).

Position 6–13 (6–13 (DAGNTNVV)) interacts with ATP. Residue 108-111 (GADR) coordinates substrate. Residue Asp110 is the Proton acceptor of the active site. Asp130 contacts K(+). Thr133 provides a ligand contact to ATP. Thr185 contacts substrate.

It belongs to the type III pantothenate kinase family. Homodimer. NH4(+) is required as a cofactor. Requires K(+) as cofactor.

It localises to the cytoplasm. It carries out the reaction (R)-pantothenate + ATP = (R)-4'-phosphopantothenate + ADP + H(+). The protein operates within cofactor biosynthesis; coenzyme A biosynthesis; CoA from (R)-pantothenate: step 1/5. Its function is as follows. Catalyzes the phosphorylation of pantothenate (Pan), the first step in CoA biosynthesis. The protein is Type III pantothenate kinase of Rhodospirillum centenum (strain ATCC 51521 / SW).